A 428-amino-acid chain; its full sequence is MSKSLNLEPIGKINGTVYLPGSKSISNRVLLLSALAAGKTRLTNFLDSDDTRYMLEALKALGVRYTVSKNGTCCEVEGVNGPLNTPHPIELMTGNAGTVMRFLTAVLSLGQSDVVLTGGARMKERPMDPLVDALRQGNAQITYLEKKNSPPLRLRGGFRGGNLTLRGNISSQFLTALLIMAPLAEQDTAIEVQGFLVSKPYVEMTLHLMRVFGISVTHKHYRTFNIKAHQKFKSPGHYRIEGDATAASYFLAAAAIKGGCVRVIGVGQKSIQGDVQFADVLQKMGAFIHWGEDYIECRPGRLKGIDMDMNSMPDAAMTLATTALFSEGPTRIQNIYNWRLKETDRLSAMSAELRKLGAQIKEGQDYIEIISPKNLKAAEIQTYNDHRIAMSFSLMALSDMPIRILNPRCTSKTFPDFFQKLAYLSGTV.

3-phosphoshikimate-binding residues include K23, S24, and R28. K23 provides a ligand contact to phosphoenolpyruvate. G97 and R125 together coordinate phosphoenolpyruvate. Residues S170, S171, Q172, S198, D314, N337, and K341 each contribute to the 3-phosphoshikimate site. Q172 provides a ligand contact to phosphoenolpyruvate. The Proton acceptor role is filled by D314. The phosphoenolpyruvate site is built by R345, R387, and K412.

The protein belongs to the EPSP synthase family. As to quaternary structure, monomer.

The protein localises to the cytoplasm. It catalyses the reaction 3-phosphoshikimate + phosphoenolpyruvate = 5-O-(1-carboxyvinyl)-3-phosphoshikimate + phosphate. Its pathway is metabolic intermediate biosynthesis; chorismate biosynthesis; chorismate from D-erythrose 4-phosphate and phosphoenolpyruvate: step 6/7. Functionally, catalyzes the transfer of the enolpyruvyl moiety of phosphoenolpyruvate (PEP) to the 5-hydroxyl of shikimate-3-phosphate (S3P) to produce enolpyruvyl shikimate-3-phosphate and inorganic phosphate. This chain is 3-phosphoshikimate 1-carboxyvinyltransferase, found in Hamiltonella defensa subsp. Acyrthosiphon pisum (strain 5AT).